Reading from the N-terminus, the 141-residue chain is Nucleoside diphosphate kinase (141 aa).

ATP-binding residues include Lys11, Phe59, Arg87, Thr93, Arg104, and Asn114. His117 functions as the Pros-phosphohistidine intermediate in the catalytic mechanism.

The protein belongs to the NDK family. Homotetramer. Mg(2+) is required as a cofactor.

The protein resides in the cytoplasm. It catalyses the reaction a 2'-deoxyribonucleoside 5'-diphosphate + ATP = a 2'-deoxyribonucleoside 5'-triphosphate + ADP. The enzyme catalyses a ribonucleoside 5'-diphosphate + ATP = a ribonucleoside 5'-triphosphate + ADP. In terms of biological role, major role in the synthesis of nucleoside triphosphates other than ATP. The ATP gamma phosphate is transferred to the NDP beta phosphate via a ping-pong mechanism, using a phosphorylated active-site intermediate. The chain is Nucleoside diphosphate kinase from Pseudomonas putida (strain W619).